The chain runs to 353 residues: MTAILERRDSENLWGRFCNWITTTENRLYIGWFGVLMIPTLLTATSVFIIAFIAAPPVDIDGIREPVSGSLLYGNNIISGAIIPTSAVIGLHFYPIWEAASVDEWLYNGGPYELIVLHFLLGVACYMGREWELSFRLGMRPWIVVAYSAPVAAATAVFLIYPIGQGSFSDGMPLGISGTFNFMIVFQAEHNILMHPFHMLGVAGVFGGSLFSAMHGSLVTSSLIRETTENESANEGYRFGQEEETYNIVAAHGYFGRLIFQYASFNNSRSLHFFLAAWPVVGIWFTALGISTMAFNLNGFNFNQSVVDSQGRVINTWADIINRANLGMEVMHERNAHNFPLDLAAVDAPSISG.

An N-acetylthreonine modification is found at Thr-2. Thr-2 is modified (phosphothreonine). Transmembrane regions (helical) follow at residues 29–46 (YIGW…TATS), 118–133 (HFLL…EWEL), and 142–156 (WIVV…AATA). His-118 is a binding site for chlorophyll a. A pheophytin a-binding site is contributed by Tyr-126. Residues Asp-170 and Glu-189 each contribute to the [CaMn4O5] cluster site. A helical transmembrane segment spans residues 197 to 218 (FHMLGVAGVFGGSLFSAMHGSL). His-198 provides a ligand contact to chlorophyll a. A quinone is bound by residues His-215 and 264 to 265 (SF). Residue His-215 coordinates Fe cation. His-272 contacts Fe cation. Residues 274–288 (FLAAWPVVGIWFTAL) traverse the membrane as a helical segment. The [CaMn4O5] cluster site is built by His-332, Glu-333, Asp-342, and Ala-344. The propeptide occupies 345–353 (AVDAPSISG).

Belongs to the reaction center PufL/M/PsbA/D family. In terms of assembly, PSII is composed of 1 copy each of membrane proteins PsbA, PsbB, PsbC, PsbD, PsbE, PsbF, PsbH, PsbI, PsbJ, PsbK, PsbL, PsbM, PsbT, PsbX, PsbY, PsbZ, Psb30/Ycf12, at least 3 peripheral proteins of the oxygen-evolving complex and a large number of cofactors. It forms dimeric complexes. Requires The D1/D2 heterodimer binds P680, chlorophylls that are the primary electron donor of PSII, and subsequent electron acceptors. It shares a non-heme iron and each subunit binds pheophytin, quinone, additional chlorophylls, carotenoids and lipids. D1 provides most of the ligands for the Mn4-Ca-O5 cluster of the oxygen-evolving complex (OEC). There is also a Cl(-1) ion associated with D1 and D2, which is required for oxygen evolution. The PSII complex binds additional chlorophylls, carotenoids and specific lipids. as cofactor. In terms of processing, tyr-161 forms a radical intermediate that is referred to as redox-active TyrZ, YZ or Y-Z. C-terminally processed by CTPA; processing is essential to allow assembly of the oxygen-evolving complex and thus photosynthetic growth.

It is found in the plastid. Its subcellular location is the chloroplast thylakoid membrane. The catalysed reaction is 2 a plastoquinone + 4 hnu + 2 H2O = 2 a plastoquinol + O2. Its function is as follows. Photosystem II (PSII) is a light-driven water:plastoquinone oxidoreductase that uses light energy to abstract electrons from H(2)O, generating O(2) and a proton gradient subsequently used for ATP formation. It consists of a core antenna complex that captures photons, and an electron transfer chain that converts photonic excitation into a charge separation. The D1/D2 (PsbA/PsbD) reaction center heterodimer binds P680, the primary electron donor of PSII as well as several subsequent electron acceptors. This chain is Photosystem II protein D1, found in Vicia faba (Broad bean).